A 429-amino-acid polypeptide reads, in one-letter code: Endoglucanase A (429 aa).

The first 34 residues, 1–34 (MVSKKQKFLTVILVIVLAIVIVGGVFGISFVKGR), serve as a signal peptide directing secretion. Over residues 46-94 (AKTEQVKEPAKEEPKLVIKEKKQDESAKKEQELKKAKEEAEAAVEKETE) the composition is skewed to basic and acidic residues. Residues 46 to 100 (AKTEQVKEPAKEEPKLVIKEKKQDESAKKEQELKKAKEEAEAAVEKETEKTEEEP) are disordered. The Proton donor role is filled by Glu249. The Nucleophile role is filled by Glu334.

The protein belongs to the glycosyl hydrolase 5 (cellulase A) family.

The enzyme catalyses Endohydrolysis of (1-&gt;4)-beta-D-glucosidic linkages in cellulose, lichenin and cereal beta-D-glucans.. The protein is Endoglucanase A (celA) of Butyrivibrio fibrisolvens.